A 54-amino-acid polypeptide reads, in one-letter code: UPF0391 membrane protein Rmet_0093 (54 aa).

Transmembrane regions (helical) follow at residues 5 to 25 (ALVF…GIAA) and 30 to 50 (IAKI…VMGL).

Belongs to the UPF0391 family.

Its subcellular location is the cell membrane. This Cupriavidus metallidurans (strain ATCC 43123 / DSM 2839 / NBRC 102507 / CH34) (Ralstonia metallidurans) protein is UPF0391 membrane protein Rmet_0093.